Consider the following 434-residue polypeptide: Chaperone SurA (434 aa).

The signal sequence occupies residues 1–20 (MKNWRTLILGLVICANTAFA). 2 consecutive PpiC domains span residues 171-272 (DTEL…KVND) and 282-382 (VTEV…QLVD).

Its subcellular location is the periplasm. The catalysed reaction is [protein]-peptidylproline (omega=180) = [protein]-peptidylproline (omega=0). In terms of biological role, chaperone involved in the correct folding and assembly of outer membrane proteins. Recognizes specific patterns of aromatic residues and the orientation of their side chains, which are found more frequently in integral outer membrane proteins. May act in both early periplasmic and late outer membrane-associated steps of protein maturation. This chain is Chaperone SurA, found in Yersinia pestis bv. Antiqua (strain Antiqua).